A 324-amino-acid polypeptide reads, in one-letter code: MDSRAGNTADPRGGRRGGGLQGSRSPRARQLLERLDARPLAARAAADLTALVRKAGATLRLRHTEGVSGLDSADIEVTDSRLPHATLVKHRPQHQRSETLGTWTEPLPVTQNKASYALKVPQATGRFSVELTRGPAGFGLTLSGGRNVSGDAPLTVHGLLKDGPAQRCGRLQAGDLVLYINGQSTQGLTHAQVVERIRTGGPHLCLVLQRPQDMDGSRIKEVGGHRKTDRSLDPRGSRVESRSTISPVHHRPKTRTSPRPSPEAVAIGHVVRAVEHPTEDLENRIPGTPGPWLVPSEDRLSRALGVRGGGAQLALEMAAGRRRH.

A disordered region spans residues 1-26 (MDSRAGNTADPRGGRRGGGLQGSRSP). One can recognise a PDZ domain in the interval 128–212 (SVELTRGPAG…HLCLVLQRPQ (85 aa)). Residues 216 to 241 (GSRIKEVGGHRKTDRSLDPRGSRVES) show a composition bias toward basic and acidic residues. The interval 216-263 (GSRIKEVGGHRKTDRSLDPRGSRVESRSTISPVHHRPKTRTSPRPSPE) is disordered. At Ser-261 the chain carries Phosphoserine.

The chain is PDZ domain-containing protein MAGIX (Magix) from Mus musculus (Mouse).